The following is a 194-amino-acid chain: Peptidyl-tRNA hydrolase (194 aa).

Tyr-17 serves as a coordination point for tRNA. Catalysis depends on His-22, which acts as the Proton acceptor. Residues Tyr-68, Asn-70, and Asn-116 each coordinate tRNA.

It belongs to the PTH family. In terms of assembly, monomer.

The protein resides in the cytoplasm. It carries out the reaction an N-acyl-L-alpha-aminoacyl-tRNA + H2O = an N-acyl-L-amino acid + a tRNA + H(+). Its function is as follows. Hydrolyzes ribosome-free peptidyl-tRNAs (with 1 or more amino acids incorporated), which drop off the ribosome during protein synthesis, or as a result of ribosome stalling. Functionally, catalyzes the release of premature peptidyl moieties from peptidyl-tRNA molecules trapped in stalled 50S ribosomal subunits, and thus maintains levels of free tRNAs and 50S ribosomes. The chain is Peptidyl-tRNA hydrolase from Pseudomonas putida (strain GB-1).